A 403-amino-acid chain; its full sequence is Protein-export membrane protein SecD (403 aa).

The next 6 membrane-spanning stretches (helical) occupy residues 14–34 (VILL…MGIQ), 238–258 (FAEG…VILI), 265–285 (ILVL…LGAA), 294–314 (LAAI…QIII), 336–356 (FFII…LAYI), and 365–385 (IGLL…GVFI).

It belongs to the SecD/SecF family. SecD subfamily. As to quaternary structure, part of the protein translocation apparatus. Forms a complex with SecF.

The protein localises to the cell membrane. Its function is as follows. Involved in protein export. The sequence is that of Protein-export membrane protein SecD from Methanothermobacter thermautotrophicus (strain ATCC 29096 / DSM 1053 / JCM 10044 / NBRC 100330 / Delta H) (Methanobacterium thermoautotrophicum).